A 505-amino-acid polypeptide reads, in one-letter code: N-succinylglutamate 5-semialdehyde dehydrogenase (505 aa).

Position 234–239 (234–239 (GSAHTG)) interacts with NAD(+). Residues glutamate 257 and cysteine 291 contribute to the active site.

It belongs to the aldehyde dehydrogenase family. AstD subfamily.

The catalysed reaction is N-succinyl-L-glutamate 5-semialdehyde + NAD(+) + H2O = N-succinyl-L-glutamate + NADH + 2 H(+). The protein operates within amino-acid degradation; L-arginine degradation via AST pathway; L-glutamate and succinate from L-arginine: step 4/5. Catalyzes the NAD-dependent reduction of succinylglutamate semialdehyde into succinylglutamate. This is N-succinylglutamate 5-semialdehyde dehydrogenase from Yersinia pestis bv. Antiqua (strain Antiqua).